The sequence spans 129 residues: Glycine cleavage system H protein (129 aa).

The Lipoyl-binding domain maps to 24–106 (AVRIGLSAYA…HGEGWLLVIQ (83 aa)). The residue at position 65 (Lys65) is an N6-lipoyllysine.

Belongs to the GcvH family. The glycine cleavage system is composed of four proteins: P, T, L and H. Requires (R)-lipoate as cofactor.

Functionally, the glycine cleavage system catalyzes the degradation of glycine. The H protein shuttles the methylamine group of glycine from the P protein to the T protein. This Synechococcus sp. (strain WH7803) protein is Glycine cleavage system H protein.